The following is a 342-amino-acid chain: S-adenosylmethionine:tRNA ribosyltransferase-isomerase (342 aa).

It belongs to the QueA family. As to quaternary structure, monomer.

The protein resides in the cytoplasm. The catalysed reaction is 7-aminomethyl-7-carbaguanosine(34) in tRNA + S-adenosyl-L-methionine = epoxyqueuosine(34) in tRNA + adenine + L-methionine + 2 H(+). Its pathway is tRNA modification; tRNA-queuosine biosynthesis. Transfers and isomerizes the ribose moiety from AdoMet to the 7-aminomethyl group of 7-deazaguanine (preQ1-tRNA) to give epoxyqueuosine (oQ-tRNA). In Bacillus licheniformis (strain ATCC 14580 / DSM 13 / JCM 2505 / CCUG 7422 / NBRC 12200 / NCIMB 9375 / NCTC 10341 / NRRL NRS-1264 / Gibson 46), this protein is S-adenosylmethionine:tRNA ribosyltransferase-isomerase.